The sequence spans 552 residues: Glucose-6-phosphate isomerase (552 aa).

Glu-359 functions as the Proton donor in the catalytic mechanism. Catalysis depends on residues His-390 and Lys-514.

This sequence belongs to the GPI family.

It localises to the cytoplasm. The catalysed reaction is alpha-D-glucose 6-phosphate = beta-D-fructose 6-phosphate. Its pathway is carbohydrate biosynthesis; gluconeogenesis. The protein operates within carbohydrate degradation; glycolysis; D-glyceraldehyde 3-phosphate and glycerone phosphate from D-glucose: step 2/4. Its function is as follows. Catalyzes the reversible isomerization of glucose-6-phosphate to fructose-6-phosphate. The protein is Glucose-6-phosphate isomerase of Streptomyces griseus subsp. griseus (strain JCM 4626 / CBS 651.72 / NBRC 13350 / KCC S-0626 / ISP 5235).